Here is a 395-residue protein sequence, read N- to C-terminus: MDEEPERTKRWEGGYERTWEILKEDESGSLKATIEDILFKAKRKRVFEHHGQVRLGMMRHLYVVVDGSRTMEDQDLKPNRLTCTLKLLEYFVEEYFDQNPISQIGIIVTKSKRAEKLTELSGNPRKHITSLKEAVDMTCHGEPSLYNSLSMAMQTLKHMPGHTSREVLIIFSSLTTCDPSNIYDLIKTLKAAKIRVSVIGLSAEVRVCTVLARETGGTYHVILDESHYKELLTHHLSPPPASSSSECSLIRMGFPQHTIASLSDQDAKPSFSMAHLDGNTEPGLTLGGYFCPQCRAKYCELPVECKICGLTLVSAPHLARSYHHLFPLDAFQEIPLEEYNGERFCYGCQGELKDQHVYVCAVCQNVFCVDCDVFVHDSLHCCPGCIHKIPAPSGV.

Positions 60–236 (HLYVVVDGSR…HYKELLTHHL (177 aa)) constitute a VWFA domain. At Tyr95 the chain carries Phosphotyrosine. Residues 291 to 308 (CPQCRAKYCELPVECKIC) form a C4-type zinc finger.

Belongs to the GTF2H2 family.

It is found in the nucleus. In terms of biological role, component of the core-TFIIH basal transcription factor involved in nucleotide excision repair (NER) of DNA and, when complexed to CAK, in RNA transcription by RNA polymerase II. The chain is General transcription factor IIH subunit 2-like protein (GTF2H2C) from Homo sapiens (Human).